The following is a 95-amino-acid chain: Aspartyl/glutamyl-tRNA(Asn/Gln) amidotransferase subunit C (95 aa).

The protein belongs to the GatC family. In terms of assembly, heterotrimer of A, B and C subunits.

It catalyses the reaction L-glutamyl-tRNA(Gln) + L-glutamine + ATP + H2O = L-glutaminyl-tRNA(Gln) + L-glutamate + ADP + phosphate + H(+). It carries out the reaction L-aspartyl-tRNA(Asn) + L-glutamine + ATP + H2O = L-asparaginyl-tRNA(Asn) + L-glutamate + ADP + phosphate + 2 H(+). Allows the formation of correctly charged Asn-tRNA(Asn) or Gln-tRNA(Gln) through the transamidation of misacylated Asp-tRNA(Asn) or Glu-tRNA(Gln) in organisms which lack either or both of asparaginyl-tRNA or glutaminyl-tRNA synthetases. The reaction takes place in the presence of glutamine and ATP through an activated phospho-Asp-tRNA(Asn) or phospho-Glu-tRNA(Gln). This Ectopseudomonas mendocina (strain ymp) (Pseudomonas mendocina) protein is Aspartyl/glutamyl-tRNA(Asn/Gln) amidotransferase subunit C.